The primary structure comprises 403 residues: Tryptophan synthase beta chain (403 aa).

N6-(pyridoxal phosphate)lysine is present on lysine 90.

This sequence belongs to the TrpB family. Tetramer of two alpha and two beta chains. The cofactor is pyridoxal 5'-phosphate.

The enzyme catalyses (1S,2R)-1-C-(indol-3-yl)glycerol 3-phosphate + L-serine = D-glyceraldehyde 3-phosphate + L-tryptophan + H2O. It functions in the pathway amino-acid biosynthesis; L-tryptophan biosynthesis; L-tryptophan from chorismate: step 5/5. The beta subunit is responsible for the synthesis of L-tryptophan from indole and L-serine. The protein is Tryptophan synthase beta chain of Leifsonia xyli subsp. xyli (strain CTCB07).